A 74-amino-acid chain; its full sequence is uncharacterized protein (74 aa).

The segment at 39–74 (SSPQAPGTLKPRALVRPSPGPVQENHLSEAQFPPKL) is disordered.

This is an uncharacterized protein from Homo sapiens (Human).